A 102-amino-acid polypeptide reads, in one-letter code: Small ribosomal subunit protein uS10 (102 aa).

This sequence belongs to the universal ribosomal protein uS10 family. Part of the 30S ribosomal subunit.

Involved in the binding of tRNA to the ribosomes. The protein is Small ribosomal subunit protein uS10 of Bacillus thuringiensis (strain Al Hakam).